The chain runs to 32 residues: Calcitonin (32 aa).

Cys1 and Cys7 are disulfide-bonded. The residue at position 32 (Pro32) is a Proline amide.

Belongs to the calcitonin family.

It localises to the secreted. Functionally, calcitonin is a peptide hormone that causes a rapid but short-lived drop in the level of calcium and phosphate in blood by promoting the incorporation of those ions in the bones. Calcitonin function is mediated by the calcitonin receptor/CALCR and the CALCR-RAMP2 (AMYR2) receptor complex. The chain is Calcitonin (CALCA) from Sus scrofa (Pig).